The chain runs to 834 residues: Glycerol-3-phosphate acyltransferase (834 aa).

Positions 309–314 (CHRSHI) match the HXXXXD motif motif.

Belongs to the GPAT/DAPAT family.

Its subcellular location is the cell inner membrane. The catalysed reaction is sn-glycerol 3-phosphate + an acyl-CoA = a 1-acyl-sn-glycero-3-phosphate + CoA. It participates in phospholipid metabolism; CDP-diacylglycerol biosynthesis; CDP-diacylglycerol from sn-glycerol 3-phosphate: step 1/3. This Pseudomonas aeruginosa (strain UCBPP-PA14) protein is Glycerol-3-phosphate acyltransferase.